Here is a 360-residue protein sequence, read N- to C-terminus: Peptide chain release factor 1 (360 aa).

Position 235 is an N5-methylglutamine (glutamine 235). The tract at residues 284 to 313 is disordered; the sequence is AKRQQAEASTRRNLLGSGDRSDRNRTYNFP.

Belongs to the prokaryotic/mitochondrial release factor family. In terms of processing, methylated by PrmC. Methylation increases the termination efficiency of RF1.

The protein localises to the cytoplasm. Peptide chain release factor 1 directs the termination of translation in response to the peptide chain termination codons UAG and UAA. This Salmonella gallinarum (strain 287/91 / NCTC 13346) protein is Peptide chain release factor 1.